We begin with the raw amino-acid sequence, 614 residues long: uncharacterized protein (614 aa).

A run of 4 helical transmembrane segments spans residues 41-61 (GWIFLLAILTVGTGVMEAVLF), 87-107 (LIGMAALLLISIVWGFLASAV), 157-177 (DTVLTLANMFVYVLVYFITSG), and 178-198 (VVLVALDSWFLLPFITWIILF). One can recognise an ABC transmembrane type-1 domain in the interval 43–330 (IFLLAILTVG…IMWESARLFE (288 aa)). The ABC transporter domain occupies 364–603 (IKFNDITFAY…NGLYAKLWNH (240 aa)). 397–404 (GRSGAGKS) is a binding site for ATP.

The protein belongs to the ABC transporter superfamily.

Its subcellular location is the cell membrane. This is an uncharacterized protein from Haemophilus influenzae (strain ATCC 51907 / DSM 11121 / KW20 / Rd).